The following is a 299-amino-acid chain: tRNA dimethylallyltransferase (299 aa).

13–20 (GPTASGKT) is an ATP binding site. 15–20 (TASGKT) contacts substrate. The interaction with substrate tRNA stretch occupies residues 38–41 (DSRQ).

Belongs to the IPP transferase family. As to quaternary structure, monomer. Requires Mg(2+) as cofactor.

The catalysed reaction is adenosine(37) in tRNA + dimethylallyl diphosphate = N(6)-dimethylallyladenosine(37) in tRNA + diphosphate. Catalyzes the transfer of a dimethylallyl group onto the adenine at position 37 in tRNAs that read codons beginning with uridine, leading to the formation of N6-(dimethylallyl)adenosine (i(6)A). This Prochlorococcus marinus subsp. pastoris (strain CCMP1986 / NIES-2087 / MED4) protein is tRNA dimethylallyltransferase.